We begin with the raw amino-acid sequence, 333 residues long: L-asparagine oxygenase (333 aa).

L-asparagine contacts are provided by E125 and N146. Fe cation contacts are provided by H155 and E157. L-asparagine is bound by residues E157 and N158. H287 contacts Fe cation. R301 serves as a coordination point for 2-oxoglutarate. R305 provides a ligand contact to L-asparagine.

This sequence belongs to the clavaminate synthase family. It depends on Fe(2+) as a cofactor.

It carries out the reaction L-asparagine + 2-oxoglutarate + O2 = (2S,3S)-3-hydroxyasparagine + succinate + CO2. It functions in the pathway antibiotic biosynthesis; calcium-dependent antibiotic biosynthesis. Catalyzes the 3-hydroxylation of L-asparagine to (2S,3S)-3-hydroxyasparagine. The 3-hydroxylated asparagine produced is incorporated at position 9 during the biosynthesis of the non-ribosomally synthesized calcium-dependent antibiotic (CDA), a 11-residue acidic lipopeptide lactone. Is able to hydroxylate only free L-asparagine, since it hydroxylates neither a CDA analog with unmodified Asn at position 9 nor a peptidyl-carrier-protein (PCP)-bound asparagine. Is not active toward D-asparagine. In Streptomyces coelicolor (strain ATCC BAA-471 / A3(2) / M145), this protein is L-asparagine oxygenase (asnO).